Here is a 272-residue protein sequence, read N- to C-terminus: Probable nitrilase C965.09 (272 aa).

The 242-residue stretch at 3 to 244 (ANIACVQMAP…EGVISYTVDL (242 aa)) folds into the CN hydrolase domain. The active-site Proton acceptor is the Glu45. The active-site Proton donor is Lys118. Cys150 (nucleophile) is an active-site residue.

It belongs to the carbon-nitrogen hydrolase superfamily.

It is found in the cytoplasm. The protein resides in the nucleus. The sequence is that of Probable nitrilase C965.09 from Schizosaccharomyces pombe (strain 972 / ATCC 24843) (Fission yeast).